The chain runs to 230 residues: Large ribosomal subunit protein uL1 (230 aa).

Belongs to the universal ribosomal protein uL1 family. As to quaternary structure, part of the 50S ribosomal subunit.

Functionally, binds directly to 23S rRNA. The L1 stalk is quite mobile in the ribosome, and is involved in E site tRNA release. In terms of biological role, protein L1 is also a translational repressor protein, it controls the translation of the L11 operon by binding to its mRNA. This chain is Large ribosomal subunit protein uL1, found in Limosilactobacillus fermentum (strain NBRC 3956 / LMG 18251) (Lactobacillus fermentum).